We begin with the raw amino-acid sequence, 419 residues long: UPF0229 protein TERTU_3150 (419 aa).

Residues 63–111 (IFHHGSGGKNNRVLPGNDRFNGGDHIERPEQGQGGGGNGSGASDSGEGE) are disordered. Residues 83–92 (NGGDHIERPE) show a composition bias toward basic and acidic residues.

This sequence belongs to the UPF0229 family.

The chain is UPF0229 protein TERTU_3150 from Teredinibacter turnerae (strain ATCC 39867 / T7901).